A 65-amino-acid polypeptide reads, in one-letter code: Large ribosomal subunit protein bL35 (65 aa).

The segment at 1 to 26 (MPKIKTLRGAAKRFKKTASGGFKRKQ) is disordered. Residues 10-26 (AAKRFKKTASGGFKRKQ) are compositionally biased toward basic residues.

This sequence belongs to the bacterial ribosomal protein bL35 family.

The polypeptide is Large ribosomal subunit protein bL35 (Histophilus somni (strain 2336) (Haemophilus somnus)).